A 463-amino-acid chain; its full sequence is Golgi-associated PDZ and coiled-coil motif-containing protein (463 aa).

S2 is subject to N-acetylserine. The stretch at 85–201 forms a coiled coil; that stretch reads AQTVSQINHK…RHIAVLQAEV (117 aa). The region spanning 289-372 is the PDZ domain; it reads KVLLLKEDHE…EIEFEVVYVA (84 aa). 2 positions are modified to phosphoserine: S402 and S405.

As to quaternary structure, homooligomer. Interacts with FZD5. Interacts with FZD8. Interacts with GRID2 and BECN1. Interacts with CSPG5. Interacts with CLCN3. Interacts with STX6. Interacts with CFTR. Interacts with ASIC3. Interacts with GOLGA3. Interacts with NLGN1. Interacts with RHOQ. Interacts with MARCHF2; the interaction leads to CFTR ubiquitination and degradation. May interact with CACNG2. Interacts with CCDC62. As to expression, ubiquitously expressed (at protein level). Expressed in dorsal root glanglion (DRG), spinal cord and brain. Isoform 1 is preferentially expressed in whole brain (at protein level) and cerebellum. Expressed in spermatocytes and spermatides but not in Sertoli cells and spermatogonia.

The protein resides in the cytoplasm. It is found in the golgi apparatus membrane. Its subcellular location is the golgi apparatus. The protein localises to the trans-Golgi network membrane. It localises to the synapse. The protein resides in the postsynaptic density. It is found in the cell projection. Its subcellular location is the dendrite. Plays a role in intracellular protein trafficking and degradation. May regulate CFTR chloride currents and acid-induced ASIC3 currents by modulating cell surface expression of both channels. May also regulate the intracellular trafficking of the ADR1B receptor. May play a role in autophagy. Together with MARCHF2 mediates the ubiquitination and lysosomal degradation of CFTR. Overexpression results in CFTR intracellular retention and degradation in the lysosomes. This Mus musculus (Mouse) protein is Golgi-associated PDZ and coiled-coil motif-containing protein.